The chain runs to 413 residues: Gamma-glutamyl phosphate reductase (413 aa).

The protein belongs to the gamma-glutamyl phosphate reductase family.

It is found in the cytoplasm. It carries out the reaction L-glutamate 5-semialdehyde + phosphate + NADP(+) = L-glutamyl 5-phosphate + NADPH + H(+). Its pathway is amino-acid biosynthesis; L-proline biosynthesis; L-glutamate 5-semialdehyde from L-glutamate: step 2/2. Catalyzes the NADPH-dependent reduction of L-glutamate 5-phosphate into L-glutamate 5-semialdehyde and phosphate. The product spontaneously undergoes cyclization to form 1-pyrroline-5-carboxylate. This Leuconostoc mesenteroides subsp. mesenteroides (strain ATCC 8293 / DSM 20343 / BCRC 11652 / CCM 1803 / JCM 6124 / NCDO 523 / NBRC 100496 / NCIMB 8023 / NCTC 12954 / NRRL B-1118 / 37Y) protein is Gamma-glutamyl phosphate reductase.